We begin with the raw amino-acid sequence, 138 residues long: MKKTALLNAELSYLVASLGHFDEITICDAGLPIPNETQRIDLALTHGVPAFIDTVRVILSEMQITGVLLASEFKQVSPDLHRALIELVEQEKLAGSRIELIYISHEAFKERTSNSKAVVRTGECTPYANVIFQSGVVF.

His20 functions as the Proton donor in the catalytic mechanism. Substrate-binding positions include Asp28, His105, and 127-129 (YAN).

The protein belongs to the RbsD / FucU family. RbsD subfamily. In terms of assembly, homodecamer.

It localises to the cytoplasm. It carries out the reaction beta-D-ribopyranose = beta-D-ribofuranose. It functions in the pathway carbohydrate metabolism; D-ribose degradation; D-ribose 5-phosphate from beta-D-ribopyranose: step 1/2. Its function is as follows. Catalyzes the interconversion of beta-pyran and beta-furan forms of D-ribose. The polypeptide is D-ribose pyranase (Psychromonas ingrahamii (strain DSM 17664 / CCUG 51855 / 37)).